A 54-amino-acid polypeptide reads, in one-letter code: Small ribosomal subunit protein uS14 (54 aa).

Positions 19, 22, 37, and 40 each coordinate Zn(2+).

Belongs to the universal ribosomal protein uS14 family. Zinc-binding uS14 subfamily. As to quaternary structure, part of the 30S ribosomal subunit. Zn(2+) serves as cofactor.

Its function is as follows. Binds 16S rRNA, required for the assembly of 30S particles. This Sulfurisphaera tokodaii (strain DSM 16993 / JCM 10545 / NBRC 100140 / 7) (Sulfolobus tokodaii) protein is Small ribosomal subunit protein uS14.